A 431-amino-acid chain; its full sequence is Beta-lactamase hydrolase-like protein (431 aa).

The Zn(2+) site is built by His-212, His-214, and His-286. Position 309 (Asp-309) interacts with substrate.

Belongs to the metallo-beta-lactamase superfamily. The cofactor is Zn(2+).

In terms of biological role, could play a role in cell adherence or biofilm development. This Xylella fastidiosa (strain Temecula1 / ATCC 700964) protein is Beta-lactamase hydrolase-like protein.